Reading from the N-terminus, the 378-residue chain is Putative protein YbfL (378 aa).

It belongs to the transposase 11 family.

This Escherichia coli (strain K12) protein is Putative protein YbfL (ybfL).